Reading from the N-terminus, the 310-residue chain is uncharacterized protein (310 aa).

This is an uncharacterized protein from Methanocaldococcus jannaschii (strain ATCC 43067 / DSM 2661 / JAL-1 / JCM 10045 / NBRC 100440) (Methanococcus jannaschii).